The following is a 297-amino-acid chain: Protoheme IX farnesyltransferase 1 (297 aa).

9 consecutive transmembrane segments (helical) span residues 23–43, 45–65, 93–113, 117–137, 145–165, 171–191, 216–236, 241–261, and 277–297; these read VVVL…RAGV, WSVL…AAVV, LPAL…LLAF, LTAW…TGFL, IVIG…AVSG, PLLL…ALAI, LHIL…YAIH, LYLA…WVLY, and IAYL…LLNL.

The protein belongs to the UbiA prenyltransferase family. Protoheme IX farnesyltransferase subfamily.

Its subcellular location is the cell inner membrane. The enzyme catalyses heme b + (2E,6E)-farnesyl diphosphate + H2O = Fe(II)-heme o + diphosphate. Its pathway is porphyrin-containing compound metabolism; heme O biosynthesis; heme O from protoheme: step 1/1. In terms of biological role, converts heme B (protoheme IX) to heme O by substitution of the vinyl group on carbon 2 of heme B porphyrin ring with a hydroxyethyl farnesyl side group. This is Protoheme IX farnesyltransferase 1 from Pseudomonas putida (strain GB-1).